The primary structure comprises 474 residues: Homocitrate synthase, mitochondrial (474 aa).

Positions 67–320 (FQIIESTLRE…KSKYKLEKLK (254 aa)) constitute a Pyruvate carboxyltransferase domain. 2-oxoglutarate is bound at residue Arg-75. Residue Glu-76 coordinates Mg(2+). 2-oxoglutarate is bound by residues His-135, Arg-195, and Thr-229. Positions 256 and 258 each coordinate Mg(2+). His-353 acts as the Proton acceptor in catalysis.

It belongs to the alpha-IPM synthase/homocitrate synthase family. Homocitrate synthase LYS20/LYS21 subfamily. Mg(2+) serves as cofactor. The cofactor is Mn(2+).

It is found in the mitochondrion. The enzyme catalyses acetyl-CoA + 2-oxoglutarate + H2O = (2R)-homocitrate + CoA + H(+). The protein operates within amino-acid biosynthesis; L-lysine biosynthesis via AAA pathway; L-alpha-aminoadipate from 2-oxoglutarate: step 1/5. Catalyzes the aldol-type condensation of 2-oxoglutarate with acetyl-CoA to yield homocitrate. Carries out the first step of the alpha-aminoadipate (AAA) lysine biosynthesis pathway. This chain is Homocitrate synthase, mitochondrial (lys1), found in Penicillium rubens (strain ATCC 28089 / DSM 1075 / NRRL 1951 / Wisconsin 54-1255) (Penicillium chrysogenum).